Reading from the N-terminus, the 914-residue chain is Translation initiation factor IF-2 (914 aa).

2 disordered regions span residues 52 to 84 and 98 to 326; these read GGGK…VKAP and AGGN…GVRL. Low complexity predominate over residues 57–68; the sequence is AEGAAKAPAKAA. Residues 69–84 show a composition bias toward basic and acidic residues; sequence AKGDAKTAAKGDVKAP. Over residues 98–138 the composition is skewed to low complexity; that stretch reads AGGNGEAAAPPAQPGGTATTPAAQATPEAPARPGPAAARPS. Pro residues-rich tracts occupy residues 139–169 and 193–207; these read APAP…PAPK and PRPV…PGAP. Residues 236-296 are compositionally biased toward gly residues; that stretch reads RPGGGRPGGP…GAAGAFGRPG (61 aa). A compositionally biased stretch (basic residues) spans 300–309; that stretch reads RRGRKSKRQK. The tr-type G domain occupies 421–581; it reads TRPPVVTVMG…AVLLTADAAL (161 aa). GTP-binding positions include 430 to 437, 469 to 473, and 523 to 526; these read GHVDHGKT, DTPGH, and NKID.

It belongs to the TRAFAC class translation factor GTPase superfamily. Classic translation factor GTPase family. IF-2 subfamily.

It is found in the cytoplasm. Its function is as follows. One of the essential components for the initiation of protein synthesis. Protects formylmethionyl-tRNA from spontaneous hydrolysis and promotes its binding to the 30S ribosomal subunits. Also involved in the hydrolysis of GTP during the formation of the 70S ribosomal complex. The sequence is that of Translation initiation factor IF-2 from Mycobacterium avium (strain 104).